A 240-amino-acid chain; its full sequence is Demethylmenaquinone methyltransferase (240 aa).

S-adenosyl-L-methionine-binding positions include T62, D80, 102 to 103, and S119; that span reads DA.

It belongs to the class I-like SAM-binding methyltransferase superfamily. MenG/UbiE family.

The enzyme catalyses a 2-demethylmenaquinol + S-adenosyl-L-methionine = a menaquinol + S-adenosyl-L-homocysteine + H(+). It participates in quinol/quinone metabolism; menaquinone biosynthesis; menaquinol from 1,4-dihydroxy-2-naphthoate: step 2/2. Methyltransferase required for the conversion of demethylmenaquinol (DMKH2) to menaquinol (MKH2). This is Demethylmenaquinone methyltransferase from Beutenbergia cavernae (strain ATCC BAA-8 / DSM 12333 / CCUG 43141 / JCM 11478 / NBRC 16432 / NCIMB 13614 / HKI 0122).